A 213-amino-acid chain; its full sequence is FQYVSTTTKVPPPDMTSFPYGTRRSPAKIWPTTKRPAITPANNPKHSKDPHKTGPEDTTVLIETKRDYSTELSVTIAVGASLLFLNILAFAALYYKKDKRRHETHRRPSPQRNTTNDIAHIQNEEIMSLQMKQLEHDHECESLQAHDTLRLTCPPDYTLTLRRSPDDIPLMTPNTITMIPNTLTGMQPLHTFNTFSGGQNSTNLPHGHSTTRV.

The segment at F1–E56 is disordered. Residues F1–S73 are Extracellular-facing. Residues H46–P55 are compositionally biased toward basic and acidic residues. The helical transmembrane segment at V74–Y94 threads the bilayer. The Cytoplasmic segment spans residues Y95 to V213. Residue S109 is modified to Phosphoserine.

It belongs to the type-B carboxylesterase/lipase family. In terms of assembly, homodimer. Interacts with NRXN1 in a calcium-dependent manner. Interaction with neurexins is mediated by heparan sulfate glycan modification on neurexin. Interacts through its C-terminus with DLG4/PSD-95 third PDZ domain.

It localises to the cell membrane. The protein resides in the postsynaptic density membrane. Cell surface protein involved in cell-cell-interactions via its interactions with neurexin family members. This Macaca mulatta (Rhesus macaque) protein is Neuroligin-4, X-linked (NLGN4X).